Here is a 181-residue protein sequence, read N- to C-terminus: MSNTTLHATTIYAVRHNGKAAMAGDGQVTLGQQVIMKQTARKVRRLYEGKVLAGFAGSVADAFTLFEKFETKLQQFSGNLERAAVELAQEWRGDKQLRQLEAMLIVMDKDAILVVSGTGEVIAPDDDLIAIGSGGNYALSAGRALKRHASHLSAEEMAYESLKVAADICVFTNDNIVVETL.

T9 is an active-site residue. A166, C169, and T172 together coordinate Na(+).

It belongs to the peptidase T1B family. HslV subfamily. As to quaternary structure, a double ring-shaped homohexamer of HslV is capped on each side by a ring-shaped HslU homohexamer. The assembly of the HslU/HslV complex is dependent on binding of ATP.

It localises to the cytoplasm. It carries out the reaction ATP-dependent cleavage of peptide bonds with broad specificity.. With respect to regulation, allosterically activated by HslU binding. Its function is as follows. Protease subunit of a proteasome-like degradation complex believed to be a general protein degrading machinery. The protein is ATP-dependent protease subunit HslV of Staphylococcus aureus (strain JH1).